A 77-amino-acid polypeptide reads, in one-letter code: Omega-conotoxin-like SO-5 (77 aa).

The signal sequence occupies residues 1–22 (MKLTCVMIVAVLLLTACQLITA). Residues 23 to 42 (DDSRGTQKHRSLRSTTKVSK) constitute a propeptide that is removed on maturation. Disulfide bonds link C46/C61, C53/C64, and C60/C71.

This sequence belongs to the conotoxin O1 superfamily. Expressed by the venom duct.

The protein localises to the secreted. Functionally, omega-conotoxins act at presynaptic membranes, they bind and block voltage-gated calcium channels (Cav). In Conus striatus (Striated cone), this protein is Omega-conotoxin-like SO-5 (SO5).